The chain runs to 278 residues: HTH-type transcriptional activator RhaS (278 aa).

The region spanning 174-272 (NLLLAWLEDH…NWSPRDIRQG (99 aa)) is the HTH araC/xylS-type domain. 2 consecutive DNA-binding regions (H-T-H motif) follow at residues 191–212 (DAVA…KQQT) and 239–262 (VTDI…RREF).

As to quaternary structure, binds DNA as a dimer.

Its subcellular location is the cytoplasm. Activates expression of the rhaBAD and rhaT operons. This Shigella boydii serotype 4 (strain Sb227) protein is HTH-type transcriptional activator RhaS.